The chain runs to 481 residues: Probable glycine dehydrogenase (decarboxylating) subunit 2 (481 aa).

The tract at residues 1-26 (MVIFEKTRGKNSPSVMPSKKGDVSNI) is disordered. K263 carries the N6-(pyridoxal phosphate)lysine modification.

The protein belongs to the GcvP family. C-terminal subunit subfamily. As to quaternary structure, the glycine cleavage system is composed of four proteins: P, T, L and H. In this organism, the P 'protein' is a heterodimer of two subunits. Requires pyridoxal 5'-phosphate as cofactor.

It catalyses the reaction N(6)-[(R)-lipoyl]-L-lysyl-[glycine-cleavage complex H protein] + glycine + H(+) = N(6)-[(R)-S(8)-aminomethyldihydrolipoyl]-L-lysyl-[glycine-cleavage complex H protein] + CO2. Functionally, the glycine cleavage system catalyzes the degradation of glycine. The P protein binds the alpha-amino group of glycine through its pyridoxal phosphate cofactor; CO(2) is released and the remaining methylamine moiety is then transferred to the lipoamide cofactor of the H protein. This Francisella tularensis subsp. mediasiatica (strain FSC147) protein is Probable glycine dehydrogenase (decarboxylating) subunit 2.